The chain runs to 118 residues: HTH-type transcriptional regulator SarT (118 aa).

The H-T-H motif DNA-binding region spans 55 to 78 (MRDIISYIGIDQSRIVKSVKELSK).

Belongs to the SarA family.

It is found in the cytoplasm. Functionally, transcriptional regulator acting as an intermediary between major regulators SarA and agr and virulence genes. Represses alpha-hemolysin (hla) gene expression. In Staphylococcus aureus (strain Mu50 / ATCC 700699), this protein is HTH-type transcriptional regulator SarT (sarT).